Here is a 388-residue protein sequence, read N- to C-terminus: MGKKAIQFGGGNIGRGFVAEFLHEAGYEVVFVDVMDAVVSALQTTPSYNVTEVSKDGENTKTISNYRAINSKTNESDAVKEIATADVVTCAVGPNILKFIAPLIAKGIDARTESKPVAVIACENAIGATDTLHGFIKEHTPKDRLDTLYDRARFANSAIDRIVPNQPPNSGLNVRIEKFYEWAVEQTPFGSFGHPDIPAIHWVDNLEPYIERKLFTVNTGHATTAYYGHLRGKKMIADALADDEIRSMVHKVLDETASLIVSKHGIPEDEQKEYVDTIIGRMSNPYLEDNIERVGRAPLRKLSRKERFIGPASQLAERGQKFDALVDAIEMALRFQNVPGDQESADLAQILKQKSSEDATSELTGLEKDHPLYSPVLERVAKVQQDTK.

Residue 5-16 (AIQFGGGNIGRG) participates in NAD(+) binding. The active site involves lysine 213.

The protein belongs to the mannitol dehydrogenase family. Monomer.

It catalyses the reaction D-mannitol 1-phosphate + NAD(+) = beta-D-fructose 6-phosphate + NADH + H(+). Functionally, catalyzes the NAD(H)-dependent interconversion of D-fructose 6-phosphate and D-mannitol 1-phosphate in the mannitol metabolic pathway. The protein is Mannitol-1-phosphate 5-dehydrogenase (mpdA) of Aspergillus terreus (strain NIH 2624 / FGSC A1156).